The sequence spans 226 residues: 2-C-methyl-D-erythritol 4-phosphate cytidylyltransferase (226 aa).

Belongs to the IspD/TarI cytidylyltransferase family. IspD subfamily.

The enzyme catalyses 2-C-methyl-D-erythritol 4-phosphate + CTP + H(+) = 4-CDP-2-C-methyl-D-erythritol + diphosphate. The protein operates within isoprenoid biosynthesis; isopentenyl diphosphate biosynthesis via DXP pathway; isopentenyl diphosphate from 1-deoxy-D-xylulose 5-phosphate: step 2/6. Its function is as follows. Catalyzes the formation of 4-diphosphocytidyl-2-C-methyl-D-erythritol from CTP and 2-C-methyl-D-erythritol 4-phosphate (MEP). In Clostridium beijerinckii (strain ATCC 51743 / NCIMB 8052) (Clostridium acetobutylicum), this protein is 2-C-methyl-D-erythritol 4-phosphate cytidylyltransferase.